The primary structure comprises 432 residues: 3-phosphoshikimate 1-carboxyvinyltransferase (432 aa).

The 3-phosphoshikimate site is built by Lys22, Ser23, and Arg27. Lys22 provides a ligand contact to phosphoenolpyruvate. 2 residues coordinate phosphoenolpyruvate: Gly96 and Arg127. Positions 173, 174, 175, 201, 317, 340, and 344 each coordinate 3-phosphoshikimate. Residue Gln175 coordinates phosphoenolpyruvate. Residue Asp317 is the Proton acceptor of the active site. Phosphoenolpyruvate-binding residues include Arg348, Arg392, and Lys417.

Belongs to the EPSP synthase family. In terms of assembly, monomer.

Its subcellular location is the cytoplasm. The catalysed reaction is 3-phosphoshikimate + phosphoenolpyruvate = 5-O-(1-carboxyvinyl)-3-phosphoshikimate + phosphate. Its pathway is metabolic intermediate biosynthesis; chorismate biosynthesis; chorismate from D-erythrose 4-phosphate and phosphoenolpyruvate: step 6/7. Functionally, catalyzes the transfer of the enolpyruvyl moiety of phosphoenolpyruvate (PEP) to the 5-hydroxyl of shikimate-3-phosphate (S3P) to produce enolpyruvyl shikimate-3-phosphate and inorganic phosphate. The sequence is that of 3-phosphoshikimate 1-carboxyvinyltransferase from Mannheimia haemolytica (Pasteurella haemolytica).